The chain runs to 40 residues: Photosystem II reaction center protein J (40 aa).

Residues 8–28 form a helical membrane-spanning segment; it reads IPLWIIGTVAGILVIGLIGIF.

The protein belongs to the PsbJ family. In terms of assembly, PSII is composed of 1 copy each of membrane proteins PsbA, PsbB, PsbC, PsbD, PsbE, PsbF, PsbH, PsbI, PsbJ, PsbK, PsbL, PsbM, PsbT, PsbX, PsbY, PsbZ, Psb30/Ycf12, at least 3 peripheral proteins of the oxygen-evolving complex and a large number of cofactors. It forms dimeric complexes.

It is found in the plastid. The protein localises to the chloroplast thylakoid membrane. In terms of biological role, one of the components of the core complex of photosystem II (PSII). PSII is a light-driven water:plastoquinone oxidoreductase that uses light energy to abstract electrons from H(2)O, generating O(2) and a proton gradient subsequently used for ATP formation. It consists of a core antenna complex that captures photons, and an electron transfer chain that converts photonic excitation into a charge separation. The polypeptide is Photosystem II reaction center protein J (Nicotiana sylvestris (Wood tobacco)).